A 657-amino-acid chain; its full sequence is THO complex subunit 1 (657 aa).

Met-1 carries the N-acetylmethionine modification. Residue Ser-2 is modified to Phosphoserine. Position 4 is a phosphothreonine (Thr-4). Residue Lys-31 forms a Glycyl lysine isopeptide (Lys-Gly) (interchain with G-Cter in SUMO2) linkage. Lys-133 carries the post-translational modification N6-acetyllysine. Residues Lys-133–Phe-167 form a dock domain; interaction with THOC2 region. The segment at Gln-194–Ala-222 is disordered. Residues Arg-206–Ala-222 are compositionally biased toward acidic residues. Residues Ser-227–Pro-397 are dock domain; interaction with THOC2. Lys-300 is modified (N6-acetyllysine). Lys-408 is covalently cross-linked (Glycyl lysine isopeptide (Lys-Gly) (interchain with G-Cter in SUMO2)). Positions Arg-414 to Lys-430 match the Nuclear localization signal motif. The interval Leu-533–Val-569 is disordered. At Ser-537 the chain carries Phosphoserine. Thr-542 is subject to Phosphothreonine. Over residues Ala-553 to Val-569 the composition is skewed to basic and acidic residues. Ser-560 bears the Phosphoserine mark. Residues Thr-570–Asn-653 enclose the Death domain. A Glycyl lysine isopeptide (Lys-Gly) (interchain with G-Cter in SUMO2) cross-link involves residue Lys-580. Lys-595 participates in a covalent cross-link: Glycyl lysine isopeptide (Lys-Gly) (interchain with G-Cter in SUMO1); alternate. Lys-595 participates in a covalent cross-link: Glycyl lysine isopeptide (Lys-Gly) (interchain with G-Cter in SUMO2); alternate.

This sequence belongs to the THOC1 family. In terms of assembly, component of the THO subcomplex, which is composed of THOC1, THOC2, THOC3, THOC5, THOC6 and THOC7. The THO subcomplex interacts with DDX39B to form the THO-DDX39B complex which multimerizes into a 28-subunit tetrameric assembly. Component of the transcription/export (TREX) complex at least composed of ALYREF/THOC4, DDX39B, SARNP/CIP29, CHTOP and the THO subcomplex; in the complex interacts with THOC2, THOC5 and THOC7. TREX seems to have a dynamic structure involving ATP-dependent remodeling. Binds to the hypophosphorylated form of RB1. Interacts with RNA polymerase II. Interacts with LUZP4. Post-translationally, expression is altered specifically during apoptosis and is accompanied by the appearance of novel forms with smaller apparent molecular mass. In terms of processing, polyubiquitinated, leading to proteasomal degradation; probably involves NEDD4. In terms of tissue distribution, ubiquitous. Expressed in various cancer cell lines. Expressed at very low levels in normal breast epithelial cells and highly expressed in breast tumors. Expression is strongly associated with an aggressive phenotype of breast tumors and expression correlates with tumor size and the metastatic state of the tumor progression.

It is found in the nucleus speckle. The protein localises to the nucleus. The protein resides in the nucleoplasm. It localises to the nucleus matrix. Its subcellular location is the cytoplasm. Component of the THO subcomplex of the TREX complex which is thought to couple mRNA transcription, processing and nuclear export, and which specifically associates with spliced mRNA and not with unspliced pre-mRNA. Required for efficient export of polyadenylated RNA. The THOC1-THOC2-THOC3 core complex alone is sufficient to bind export factor NXF1-NXT1 and promote ATPase activity of DDX39B/UAP56. TREX is recruited to spliced mRNAs by a transcription-independent mechanism, binds to mRNA upstream of the exon-junction complex (EJC) and is recruited in a splicing- and cap-dependent manner to a region near the 5' end of the mRNA where it functions in mRNA export to the cytoplasm via the TAP/NXF1 pathway. Regulates transcriptional elongation of a subset of genes. Involved in genome stability by preventing co-transcriptional R-loop formation. May play a role in hair cell formation, hence may be involved in hearing. In terms of biological role, participates in an apoptotic pathway which is characterized by activation of caspase-6, increases in the expression of BAK1 and BCL2L1 and activation of NF-kappa-B. This pathway does not require p53/TP53, nor does the presence of p53/TP53 affect the efficiency of cell killing. Activates a G2/M cell cycle checkpoint prior to the onset of apoptosis. Apoptosis is inhibited by association with RB1. Functionally, (Microbial infection) The TREX complex is essential for the export of Kaposi's sarcoma-associated herpesvirus (KSHV) intronless mRNAs and infectious virus production. This is THO complex subunit 1 (THOC1) from Homo sapiens (Human).